A 20-amino-acid polypeptide reads, in one-letter code: Brevinin-1ITa (20 aa).

The residue at position 8 (Met8) is a Methionine sulfoxide; partial. A disulfide bond links Cys14 and Cys20.

It belongs to the frog skin active peptide (FSAP) family. Brevinin subfamily. As to expression, expressed by the skin glands.

It localises to the secreted. Functionally, antimicrobial peptide active against Gram-positive bacterium S.epidermidis ATCC 12228 (MIC=4 uM), against Gram-negative bacterium E.coli ATCC 25922 (MIC=64 uM) and against yeast C.parapsilosis ATCC 22019 (MIC=16 uM). Has hemolytic and cytotoxic activity. The sequence is that of Brevinin-1ITa from Rana italica (Italian stream frog).